Consider the following 339-residue polypeptide: tRNA methyltransferase 10 homolog A (339 aa).

Disordered regions lie at residues 1-90 (MSSE…HDRK) and 282-339 (DKAC…SLPH). Basic and acidic residues predominate over residues 14 to 35 (NVDKKQGINEDQEESQKPRLGE). Positions 52-81 (KQWEEQRELRKQKRKEKRKRKKLERQCQME) form a coiled coil. Over residues 61-74 (RKQKRKEKRKRKKL) the composition is skewed to basic residues. Residues 89-279 (RKRVRRDVVH…TILPQRKGAV (191 aa)) enclose the SAM-dependent MTase TRM10-type domain. A compositionally biased stretch (acidic residues) spans 300–309 (GGSDSDSSEE). Over residues 310-330 (EYSRNELDSPHEEKQDKENHT) the composition is skewed to basic and acidic residues. Ser-336 bears the Phosphoserine mark.

Belongs to the class IV-like SAM-binding methyltransferase superfamily. TRM10 family. Interacts with tRNA. Expressed in embryonic and fetal brain. It is expressed throughout the dorsal telencephalon at 8 and 11 weeks of gestation, with highest expression in ventricular zone and marginal zone. Detected in cerebellar cortex and nuclei, but not in dorsal telencephalon, at later stages.

Its subcellular location is the nucleus. It is found in the nucleolus. The enzyme catalyses guanosine(9) in tRNA + S-adenosyl-L-methionine = N(1)-methylguanosine(9) in tRNA + S-adenosyl-L-homocysteine + H(+). In terms of biological role, S-adenosyl-L-methionine-dependent guanine N(1)-methyltransferase that catalyzes the formation of N(1)-methylguanine at position 9 (m1G9) in tRNAs. Probably not able to catalyze formation of N(1)-methyladenine at position 9 (m1A9) in tRNAs. This Homo sapiens (Human) protein is tRNA methyltransferase 10 homolog A (TRMT10A).